Reading from the N-terminus, the 172-residue chain is Myosin regulatory light polypeptide 9 (172 aa).

A compositionally biased stretch (basic residues) spans 1–16 (MSSKRAKTKTTKKRPQ). Positions 1–20 (MSSKRAKTKTTKKRPQRATS) are disordered. Ser2 is modified (N-acetylserine). Thr19 carries the phosphothreonine; by MLCK, CIT and ROCK2 modification. A Phosphoserine; by CDC42BP, CIT, MLCK, PAK1, ROCK1, ROCK2, DAPK1, DAPK2 and ZIPK/DAPK3 modification is found at Ser20. EF-hand domains are found at residues 29 to 64 (SQIQ…LGKN), 98 to 133 (DPED…MGDR), and 134 to 169 (FTDE…GAKD). Residues Asp42, Asn44, Asp46, and Asp53 each coordinate Ca(2+).

In terms of assembly, myosin is a hexamer of 2 heavy chains and 4 light chains: interacts with myosin heavy chain MYO19. Interacts with LUZP1; the interaction results in inhibition of phosphorylation of MYL9 by DAPK3. In terms of processing, phosphorylation increases the actin-activated myosin ATPase activity and thereby regulates the contractile activity. It is required to generate the driving force in the migration of the cells but not necessary for localization of myosin-2 at the leading edge. Phosphorylation is required for myotube formation. Phosphorylated by DAPK3; DAPK3-mediated phosphorylation is inhibited by LUZP1.

Its subcellular location is the cytoplasm. The protein resides in the cytoskeleton. It localises to the cell cortex. In terms of biological role, myosin regulatory subunit that plays an important role in regulation of both smooth muscle and nonmuscle cell contractile activity via its phosphorylation. Implicated in cytokinesis, receptor capping, and cell locomotion. In myoblasts, may regulate PIEZO1-dependent cortical actomyosin assembly involved in myotube formation. The chain is Myosin regulatory light polypeptide 9 (MYL9) from Bos taurus (Bovine).